The chain runs to 144 residues: Large ribosomal subunit protein uL13 (144 aa).

Belongs to the universal ribosomal protein uL13 family. In terms of assembly, part of the 50S ribosomal subunit.

Its function is as follows. This protein is one of the early assembly proteins of the 50S ribosomal subunit, although it is not seen to bind rRNA by itself. It is important during the early stages of 50S assembly. The sequence is that of Large ribosomal subunit protein uL13 from Mesomycoplasma hyopneumoniae (strain 232) (Mycoplasma hyopneumoniae).